The chain runs to 126 residues: Fluoride-specific ion channel FluC (126 aa).

4 helical membrane-spanning segments follow: residues 4-24 (SILA…FLGI), 35-55 (LGTF…VAGF), 68-88 (FVIT…AEVV), and 103-123 (IVIH…TVSL). The Na(+) site is built by Gly75 and Ser78.

The protein belongs to the fluoride channel Fluc/FEX (TC 1.A.43) family.

It localises to the cell inner membrane. The catalysed reaction is fluoride(in) = fluoride(out). Na(+) is not transported, but it plays an essential structural role and its presence is essential for fluoride channel function. Fluoride-specific ion channel. Important for reducing fluoride concentration in the cell, thus reducing its toxicity. This is Fluoride-specific ion channel FluC from Paraburkholderia xenovorans (strain LB400).